An 869-amino-acid polypeptide reads, in one-letter code: Retrovirus-related Pol polyprotein from type-1 retrotransposable element R2 (869 aa).

Residues 199-475 (IFVFYGRVPS…DLWKYLGVVY (277 aa)) form the Reverse transcriptase domain. Residues 601-869 (LYASISHSCK…FNNVTTVVHW (269 aa)) form a nucleic acid-binding endonuclease region.

It carries out the reaction DNA(n) + a 2'-deoxyribonucleoside 5'-triphosphate = DNA(n+1) + diphosphate. The polypeptide is Retrovirus-related Pol polyprotein from type-1 retrotransposable element R2 (Bradysia coprophila (Dark-winged fungus gnat)).